The primary structure comprises 389 residues: Type III polyketide synthase 21 (389 aa).

Cysteine 170 acts as the Nucleophile in catalysis.

It belongs to the thiolase-like superfamily. Chalcone/stilbene synthases family. Expressed in anthers. Expressed in young and adult flowers.

Functionally, plant type III polyketide synthases (PKSs) that catalyzes the condensation of fatty acyl-CoA with malonyl-CoA to generate triketide and tetraketide alpha-pyrones, the main components of pollen exine and potential sporopollenin precursors. The polypeptide is Type III polyketide synthase 21 (PKS21) (Oryza sativa subsp. japonica (Rice)).